Reading from the N-terminus, the 310-residue chain is 1-aminocyclopropane-1-carboxylate oxidase 1 (310 aa).

Residues 113–133 (EELSKTMDEYVCQLHKFAERL) adopt a coiled-coil conformation. The Fe2OG dioxygenase domain occupies 158–259 (PAFGTKVAKY…RLSIATFYNP (102 aa)). Positions 182, 184, and 240 each coordinate Fe cation. Residue arginine 250 coordinates 2-oxoglutarate.

Belongs to the iron/ascorbate-dependent oxidoreductase family. The cofactor is Fe(2+).

The enzyme catalyses 1-aminocyclopropane-1-carboxylate + L-ascorbate + O2 = ethene + L-dehydroascorbate + hydrogen cyanide + CO2 + 2 H2O. It participates in alkene biosynthesis; ethylene biosynthesis via S-adenosyl-L-methionine; ethylene from S-adenosyl-L-methionine: step 2/2. Functionally, enzyme involved in the ethylene biosynthesis. May promote stem elongation by maximizing the extensibility cells, possibly by activating ethylene biosynthesis, in response to very-long-chain fatty acids (VLCFAs C20:0 to C30:0). The polypeptide is 1-aminocyclopropane-1-carboxylate oxidase 1 (ACO1) (Arabidopsis thaliana (Mouse-ear cress)).